The primary structure comprises 824 residues: C-Jun-amino-terminal kinase-interacting protein 2 (824 aa).

Disordered regions lie at residues 1 to 28, 40 to 160, 172 to 349, and 361 to 501; these read MADR…QDIS, ITDD…GFDL, CSPA…DSPW, and EGSS…APRD. A compositionally biased stretch (acidic residues) spans 77–110; it reads DFQEFEMIDDNEEEDDEDEEEEEEEEEGDGEGQE. The JNK-binding domain (JBD) stretch occupies residues 110–275; that stretch reads EGGDPGSEAP…RMISSISETE (166 aa). Polar residues predominate over residues 141–156; the sequence is LRLTTLGAQDSLNNNG. A necessary for interaction with FGF13 region spans residues 239 to 498; that stretch reads GRGGRRSSQE…PGGRGTGPSA (260 aa). Phosphoserine occurs at positions 254, 302, and 305. The span at 268 to 305 shows a compositional bias: low complexity; that stretch reads ISSISETELELSSDGGSSSSGRSSHLTNSIEEASSPAS. A compositionally biased stretch (acidic residues) spans 327 to 346; the sequence is TNSEYESGSESEPDLSEDAD. The span at 416-432 shows a compositional bias: pro residues; sequence APPPPAPAAPRPGPAQP. The segment covering 451 to 467 has biased composition (low complexity); sequence AAPGRAARPGRACSAAC. The span at 468–484 shows a compositional bias: acidic residues; sequence SEEEDEEDDEEEEDAED. The 62-residue stretch at 604–665 folds into the SH3 domain; sequence EREQTHRAVF…PAFYAHAVPG (62 aa). The PID domain occupies 677-813; the sequence is PCWVERFDVQ…FLEYYQEHLA (137 aa).

Belongs to the JIP scaffold family. In terms of assembly, forms homo- or heterooligomeric complexes. Binds specific components of the JNK signaling pathway namely JNK1, JNK2, JNK3, MAP2K7, MAP3K10, MAP3K11, MAP3K12 and MAPK13. Also binds the proline-rich domain-containing splice variant of apolipoprotein E receptor 2 (ApoER2). Binds the cytoplasmic tails of LRP1 and LRP2 (Megalin). Binds the TPR motif-containing C-terminal of kinesin light chain, Klc1, pre-assembled MAPK8IP1 scaffolding complexes are then transported as a cargo of kinesin, to the required subcellular location. Interacts with the cytoplasmic domain of APP. Interacts with DCLK2. Interacts with TIAM1 and TIAM2. Interacts with FGF13; enables the interaction with MAPK13 and may regulate the MAPK8IP2 scaffolding activity. Interacts with SH3RF2. Expressed mainly in the brain and pancreas, including insulin-secreting cells. In the nervous system, more abundantly expressed in the cerebellum, pituitary gland, occipital lobe and the amygdala. Also expressed in fetal brain. Very low levels found in uterus, ovary, prostate, colon, testis, adrenal gland, thyroid gland and salivary gland.

It is found in the cytoplasm. The JNK-interacting protein (JIP) group of scaffold proteins selectively mediates JNK signaling by aggregating specific components of the MAPK cascade to form a functional JNK signaling module. JIP2 inhibits IL1 beta-induced apoptosis in insulin-secreting cells. May function as a regulator of vesicle transport, through interactions with the JNK-signaling components and motor proteins. This chain is C-Jun-amino-terminal kinase-interacting protein 2 (MAPK8IP2), found in Homo sapiens (Human).